Consider the following 1992-residue polypeptide: E3 ubiquitin-protein ligase TRIP12 (1992 aa).

Positions 1–10 (MSNRPNNNPG) are enriched in polar residues. The interval 1–398 (MSNRPNNNPG…SGESESDDSE (398 aa)) is disordered. Serine 2 carries the post-translational modification N-acetylserine. Serine 12 carries the phosphoserine modification. A compositionally biased stretch (polar residues) spans 18–27 (RNTAGAQPQD). Residues 29 to 43 (SIGGRSCSSSSVVIV) show a composition bias toward low complexity. The segment covering 48–70 (DPDRANTSEKQKTGQVPKKDNSR) has biased composition (basic and acidic residues). Phosphoserine is present on residues serine 77, serine 85, and serine 100. Over residues 78-88 (PDYNRTNSPSS) the composition is skewed to polar residues. Over residues 154-164 (SSCIKSASVSE) the composition is skewed to polar residues. Low complexity-rich tracts occupy residues 175-188 (PTKL…SAKA) and 196-215 (SSSA…ASSA). Lysine 181 carries the post-translational modification N6-acetyllysine. Residues 280-290 (PGSSKSETSKP) show a composition bias toward polar residues. 2 positions are modified to phosphoserine: serine 310 and serine 312. A compositionally biased stretch (low complexity) spans 330-339 (GSCASASRRG). The segment covering 346–358 (GAAEARRQEKMAD) has biased composition (basic and acidic residues). Over residues 362–371 (NQETVNSSAA) the composition is skewed to polar residues. Residues 749–836 (MLKKGNAQNT…DPELAKSFIK (88 aa)) form the WWE domain. The segment at 938–1044 (SLLTSPPKAC…QSPKSSFLAS (107 aa)) is disordered. Position 942 is a phosphoserine (serine 942). Positions 948 to 960 (TNGSGSLGSTPSV) are enriched in polar residues. Residues 961 to 973 (NSGTATAATNASA) show a composition bias toward low complexity. Serine 991 and serine 997 each carry phosphoserine. Over residues 1001-1014 (KRKRLPKRGSRRPK) the composition is skewed to basic residues. Residue serine 1016 is modified to Phosphoserine. The span at 1017-1026 (PPRDDDKVDN) shows a compositional bias: basic and acidic residues. Residues 1029–1040 (KSPTTTQSPKSS) are compositionally biased toward low complexity. A phosphoserine mark is found at serine 1030, serine 1317, serine 1322, serine 1329, and serine 1376. Threonine 1377 carries the post-translational modification Phosphothreonine. 2 disordered regions span residues 1407 to 1434 (SNKD…AKKH) and 1568 to 1587 (TNPE…PRLD). Lysine 1425 carries the N6-acetyllysine modification. Phosphoserine is present on serine 1427. Residues 1496 to 1570 (EIIPTSEFIN…AMQRLLDTNP (75 aa)) form a K-box region. In terms of domain architecture, HECT spans 1885-1992 (PDHGYTHDSR…REGQQSFHLS (108 aa)). The active-site Glycyl thioester intermediate is cysteine 1959.

This sequence belongs to the UPL family. K-HECT subfamily. Interacts with MYC; leading to disrupt interaction with isoform p19ARF/ARF of CDKN2A. Interacts with TRADD; leading to disrupt interaction with isoform p19ARF/ARF of CDKN2A. Interacts with SMARCC1; leading to disrupt interaction with SMARCE1.

The protein localises to the nucleus. The protein resides in the nucleoplasm. It carries out the reaction S-ubiquitinyl-[E2 ubiquitin-conjugating enzyme]-L-cysteine + [acceptor protein]-L-lysine = [E2 ubiquitin-conjugating enzyme]-L-cysteine + N(6)-ubiquitinyl-[acceptor protein]-L-lysine.. It participates in protein modification; protein ubiquitination. Functionally, E3 ubiquitin-protein ligase involved in ubiquitin fusion degradation (UFD) pathway and regulation of DNA repair. Part of the ubiquitin fusion degradation (UFD) pathway, a process that mediates ubiquitination of protein at their N-terminus, regardless of the presence of lysine residues in target proteins. Acts as a key regulator of DNA damage response by acting as a suppressor of RNF168, an E3 ubiquitin-protein ligase that promotes accumulation of 'Lys-63'-linked histone H2A and H2AX at DNA damage sites, thereby acting as a guard against excessive spreading of ubiquitinated chromatin at damaged chromosomes. In normal cells, mediates ubiquitination and degradation of isoform p19ARF/ARF of CDKN2A, a lysine-less tumor suppressor required for p53/TP53 activation under oncogenic stress. In cancer cells, however, isoform p19ARF/ARF and TRIP12 are located in different cell compartments, preventing isoform p19ARF/ARF ubiquitination and degradation. Does not mediate ubiquitination of isoform p16-INK4a of CDKN2A. Also catalyzes ubiquitination of NAE1 and SMARCE1, leading to their degradation. Ubiquitination and degradation of target proteins is regulated by interaction with proteins such as MYC, TRADD or SMARCC1, which disrupt the interaction between TRIP12 and target proteins. Mediates ubiquitination of ASXL1: following binding to N(6)-methyladenosine methylated DNA, ASXL1 is ubiquitinated by TRIP12, leading to its degradation and subsequent inactivation of the PR-DUB complex. This chain is E3 ubiquitin-protein ligase TRIP12 (TRIP12), found in Bos taurus (Bovine).